The chain runs to 136 residues: MTERTLVLIKPDGVQRQLVGEIISRIERKGLAIAALELRNVTEELASQHYAEHEGKPFFGSLLEFITSAPVVAAIVEGPRAIAAFRQLAGGTDPVEKATPGTIRGDFGLETQFNLVHGSDSAESAQREIALWFPSA.

The ATP site is built by lysine 10, phenylalanine 58, arginine 86, threonine 92, arginine 104, and asparagine 114. Residue histidine 117 is the Pros-phosphohistidine intermediate of the active site.

Belongs to the NDK family. In terms of assembly, homotetramer. It depends on Mg(2+) as a cofactor.

It localises to the cytoplasm. The enzyme catalyses a 2'-deoxyribonucleoside 5'-diphosphate + ATP = a 2'-deoxyribonucleoside 5'-triphosphate + ADP. It catalyses the reaction a ribonucleoside 5'-diphosphate + ATP = a ribonucleoside 5'-triphosphate + ADP. Major role in the synthesis of nucleoside triphosphates other than ATP. The ATP gamma phosphate is transferred to the NDP beta phosphate via a ping-pong mechanism, using a phosphorylated active-site intermediate. In Mycobacterium marinum (strain ATCC BAA-535 / M), this protein is Nucleoside diphosphate kinase.